The sequence spans 255 residues: Imidazole glycerol phosphate synthase subunit HisF (255 aa).

Catalysis depends on residues Asp11 and Asp130.

This sequence belongs to the HisA/HisF family. Heterodimer of HisH and HisF.

It is found in the cytoplasm. The catalysed reaction is 5-[(5-phospho-1-deoxy-D-ribulos-1-ylimino)methylamino]-1-(5-phospho-beta-D-ribosyl)imidazole-4-carboxamide + L-glutamine = D-erythro-1-(imidazol-4-yl)glycerol 3-phosphate + 5-amino-1-(5-phospho-beta-D-ribosyl)imidazole-4-carboxamide + L-glutamate + H(+). Its pathway is amino-acid biosynthesis; L-histidine biosynthesis; L-histidine from 5-phospho-alpha-D-ribose 1-diphosphate: step 5/9. Functionally, IGPS catalyzes the conversion of PRFAR and glutamine to IGP, AICAR and glutamate. The HisF subunit catalyzes the cyclization activity that produces IGP and AICAR from PRFAR using the ammonia provided by the HisH subunit. The chain is Imidazole glycerol phosphate synthase subunit HisF from Exiguobacterium sp. (strain ATCC BAA-1283 / AT1b).